The chain runs to 395 residues: Elongation factor Tu (395 aa).

One can recognise a tr-type G domain in the interval 10 to 205 (KPHVNIGTIG…VDNWIPIPPR (196 aa)). Residues 19–26 (GHVDHGKT) are G1. 19–26 (GHVDHGKT) provides a ligand contact to GTP. T26 serves as a coordination point for Mg(2+). Residues 60 to 64 (GITIN) are G2. The interval 81 to 84 (DCPG) is G3. Residues 81 to 85 (DCPGH) and 136 to 139 (NKVD) each bind GTP. Positions 136–139 (NKVD) are G4. A G5 region spans residues 174–176 (SAL).

The protein belongs to the TRAFAC class translation factor GTPase superfamily. Classic translation factor GTPase family. EF-Tu/EF-1A subfamily. Monomer.

The protein localises to the cytoplasm. It carries out the reaction GTP + H2O = GDP + phosphate + H(+). GTP hydrolase that promotes the GTP-dependent binding of aminoacyl-tRNA to the A-site of ribosomes during protein biosynthesis. The sequence is that of Elongation factor Tu from Hymenobacter ocellatus (Parahymenobacter ocellatus).